A 433-amino-acid chain; its full sequence is Staphylopine synthase (433 aa).

Residues 9 to 12 (TGPV), Arg-33, 37 to 40 (SEKS), and Asp-99 each bind NADP(+). Residue His-216 is the Proton donor/acceptor of the active site.

It belongs to the staphylopine dehydrogenase family. As to quaternary structure, homodimer.

The enzyme catalyses staphylopine + NADP(+) + H2O = (2S)-2-amino-4-{[(1R)-1-carboxy-2-(1H-imidazol-4-yl)ethyl]amino}butanoate + pyruvate + NADPH + H(+). Functionally, catalyzes the NADPH-dependent reductive condensation of pyruvate to the intermediate formed by the adjacently encoded enzyme CntL, namely (2S)-2-amino-4-{[(1R)-1-carboxy-2-(1H-imidazol-4-yl)ethyl]amino}butanoate, leading to the production of staphylopine. This is the last step in the biosynthesis of the metallophore staphylopine, which is involved in the acquisition of nickel, cobalt, zinc, copper, and iron, and thus enables bacterial growth inside the host, where metal access is limited. Therefore, this enzyme probably contributes to staphylococcal virulence. Can use neither NADH nor alpha-ketoglutarate in place of NADPH and pyruvate, respectively. The sequence is that of Staphylopine synthase from Staphylococcus aureus (strain Mu50 / ATCC 700699).